The following is a 165-amino-acid chain: Regulator of ribonuclease activity A (165 aa).

The protein belongs to the RraA family. Homotrimer. Binds to both RNA-binding sites in the C-terminal region of Rne and to RhlB.

The protein resides in the cytoplasm. In terms of biological role, globally modulates RNA abundance by binding to RNase E (Rne) and regulating its endonucleolytic activity. Can modulate Rne action in a substrate-dependent manner by altering the composition of the degradosome. Modulates RNA-binding and helicase activities of the degradosome. This is Regulator of ribonuclease activity A from Haemophilus ducreyi (strain 35000HP / ATCC 700724).